Here is a 96-residue protein sequence, read N- to C-terminus: Cytochrome c-553 (96 aa).

The N-terminal stretch at 1–19 (MKKVIMALGVLAFANALMA) is a signal peptide. Heme c is bound by residues cysteine 29, cysteine 32, histidine 33, and methionine 73.

It belongs to the cytochrome c family. In terms of processing, binds 1 heme c group covalently per subunit.

Its subcellular location is the periplasm. Its function is as follows. Natural electron acceptor for a formate dehydrogenase. This is Cytochrome c-553 from Helicobacter pylori (strain ATCC 700392 / 26695) (Campylobacter pylori).